Consider the following 214-residue polypeptide: Large ribosomal subunit protein uL1 (214 aa).

Belongs to the universal ribosomal protein uL1 family. In terms of assembly, part of the 50S ribosomal subunit.

Binds directly to 23S rRNA. Probably involved in E site tRNA release. In terms of biological role, protein L1 is also a translational repressor protein, it controls the translation of its operon by binding to its mRNA. The polypeptide is Large ribosomal subunit protein uL1 (Methanopyrus kandleri (strain AV19 / DSM 6324 / JCM 9639 / NBRC 100938)).